We begin with the raw amino-acid sequence, 112 residues long: Protein preY, mitochondrial (112 aa).

A mitochondrion-targeting transit peptide spans M1 to S34. Residues H49–Q95 form the TRM112 domain.

It belongs to the PREY family. In terms of assembly, interacts (via TRM112 domain) with NDUFAF5; the interaction is direct and stabilizes NDUFAF5 protein. Interacts with COQ5; the interaction is direct, stabilizes COQ5 protein and associates PYURF with COQ enzyme complex.

Its subcellular location is the mitochondrion. Its function is as follows. In mitochondria, S-adenosylmethionine-dependent methyltransferase chaperone that supports both coenzyme Q biosynthesis, by stabilizing its components, such as COQ5, and NADH:ubiquinone oxidoreductase complex (complex I, MT-ND1) assembly, by stabilizing complex I assembly factors, such as NDUFAF5. The sequence is that of Protein preY, mitochondrial (Pyurf) from Rattus norvegicus (Rat).